The primary structure comprises 133 residues: MSNHDPISDMLTRIRNASQKKHTTTTIPGSKMSLSIAKVLQKEGFISDINEEGEGYKSQIILSLKYSGKNKFPTIRSMQRVSKPGLRIYKNTRGLPKVLGGLGVAIISTSKGVMSDRDARKQGIGGEVLCYVY.

It belongs to the universal ribosomal protein uS8 family. In terms of assembly, part of the 30S ribosomal subunit. Contacts proteins S5 and S12.

In terms of biological role, one of the primary rRNA binding proteins, it binds directly to 16S rRNA central domain where it helps coordinate assembly of the platform of the 30S subunit. The protein is Small ribosomal subunit protein uS8 of Prochlorococcus marinus (strain MIT 9312).